Consider the following 330-residue polypeptide: DNA-directed RNA polymerase subunit alpha (330 aa).

The interval 1-235 is alpha N-terminal domain (alpha-NTD); that stretch reads MVREKVKVST…DLFIHFLHAK (235 aa). The tract at residues 270 to 330 is alpha C-terminal domain (alpha-CTD); the sequence is IALKYIFIDQ…KQILGILEKK (61 aa).

It belongs to the RNA polymerase alpha chain family. As to quaternary structure, in plastids the minimal PEP RNA polymerase catalytic core is composed of four subunits: alpha, beta, beta', and beta''. When a (nuclear-encoded) sigma factor is associated with the core the holoenzyme is formed, which can initiate transcription.

The protein resides in the plastid. The protein localises to the chloroplast. It catalyses the reaction RNA(n) + a ribonucleoside 5'-triphosphate = RNA(n+1) + diphosphate. Its function is as follows. DNA-dependent RNA polymerase catalyzes the transcription of DNA into RNA using the four ribonucleoside triphosphates as substrates. In Gossypium barbadense (Sea Island cotton), this protein is DNA-directed RNA polymerase subunit alpha (rpoA).